The sequence spans 895 residues: Serine-rich coiled-coil domain-containing protein 1 (895 aa).

Disordered stretches follow at residues 1 to 142 (MGDS…KEPS), 154 to 177 (SGRS…KQST), 332 to 394 (ELHS…RTLG), and 459 to 497 (RSSS…SSKM). A compositionally biased stretch (low complexity) spans 43-56 (SSSPSSTNSSSGST). Residues 83–102 (TEQNLSISNGAQPSHSNMQK) are compositionally biased toward polar residues. The segment covering 131-142 (LTEDFEREKEPS) has biased composition (basic and acidic residues). Polar residues predominate over residues 348–358 (SLQSTELSVGN). The stretch at 675–705 (MLRLQLKDRDELISQLQAELEKVQHLQKAFA) forms a coiled coil. Residues 731–753 (QGGRETTHRNRTMSQSHSTRDRK) form a disordered region.

This sequence belongs to the CCSER family.

This Mus musculus (Mouse) protein is Serine-rich coiled-coil domain-containing protein 1 (Ccser1).